The primary structure comprises 323 residues: MKKNKDVLLKNKILKKLNIINIKNLDNIKEKLKKPDWIKIKIPVNTSRIYQIKNALRKNNLYSVCEEAHCPNLSECFNNGTATFMILGSICTRNCPFCAVFHGRPNPVNVEEPQKLSDTIFDMGINYVVITSVVRDDLYDGGAEHFVNCIKAIKNKNQVKIEILVPDFRGRIELILNIFNKALPDIFNHNIENVPRLFKKIRPGANYQRSLLLLESFKKKYCSVLTKSGLMLGLGEKDVEIIQVMKDLYSSGVTLLTVGQYLQPSIHHLPVKRYIPLSEFENIKKEALSIGFTNAFCGPFIRSSYHASFQSHLPIKNNDINNI.

[4Fe-4S] cluster is bound by residues cysteine 65, cysteine 70, cysteine 76, cysteine 91, cysteine 95, cysteine 98, and serine 304. One can recognise a Radical SAM core domain in the interval 77-293 (FNNGTATFMI…KKEALSIGFT (217 aa)).

The protein belongs to the radical SAM superfamily. Lipoyl synthase family. [4Fe-4S] cluster is required as a cofactor.

Its subcellular location is the cytoplasm. It catalyses the reaction [[Fe-S] cluster scaffold protein carrying a second [4Fe-4S](2+) cluster] + N(6)-octanoyl-L-lysyl-[protein] + 2 oxidized [2Fe-2S]-[ferredoxin] + 2 S-adenosyl-L-methionine + 4 H(+) = [[Fe-S] cluster scaffold protein] + N(6)-[(R)-dihydrolipoyl]-L-lysyl-[protein] + 4 Fe(3+) + 2 hydrogen sulfide + 2 5'-deoxyadenosine + 2 L-methionine + 2 reduced [2Fe-2S]-[ferredoxin]. The protein operates within protein modification; protein lipoylation via endogenous pathway; protein N(6)-(lipoyl)lysine from octanoyl-[acyl-carrier-protein]: step 2/2. Its function is as follows. Catalyzes the radical-mediated insertion of two sulfur atoms into the C-6 and C-8 positions of the octanoyl moiety bound to the lipoyl domains of lipoate-dependent enzymes, thereby converting the octanoylated domains into lipoylated derivatives. This is Lipoyl synthase from Buchnera aphidicola subsp. Acyrthosiphon pisum (strain APS) (Acyrthosiphon pisum symbiotic bacterium).